We begin with the raw amino-acid sequence, 159 residues long: H/ACA ribonucleoprotein complex subunit 2-like protein (159 aa).

Residues Met-1–Arg-28 are disordered.

The protein belongs to the eukaryotic ribosomal protein eL8 family. As to quaternary structure, component of the small nucleolar ribonucleoprotein particle containing H/ACA-type snoRNAs (H/ACA snoRNPs). Component of the telomerase holoenzyme complex.

The protein localises to the nucleus. The protein resides in the nucleolus. Its function is as follows. Required for ribosome biogenesis. Part of a complex which catalyzes pseudouridylation of rRNA. This involves the isomerization of uridine such that the ribose is subsequently attached to C5, instead of the normal N1. Pseudouridine ('psi') residues may serve to stabilize the conformation of rRNAs. The polypeptide is H/ACA ribonucleoprotein complex subunit 2-like protein (Branchiostoma belcheri (Amphioxus)).